Consider the following 525-residue polypeptide: Squalene epoxidase 3 (525 aa).

The helical transmembrane segment at 9 to 29 (HCILTTTFVASLFAFLLLYVL) threads the bilayer. Residues 64–65 (VA), 84–85 (ER), Arg-92, Arg-163, Val-179, Asp-341, and Met-354 contribute to the FAD site. The next 2 membrane-spanning stretches (helical) occupy residues 452 to 472 (LVLH…VPLP) and 477 to 497 (LWLG…IIKA).

Belongs to the squalene monooxygenase family. The cofactor is FAD. In terms of tissue distribution, expressed in seedlings, leaves, stems, inflorescences and siliques.

The protein localises to the membrane. It catalyses the reaction squalene + reduced [NADPH--hemoprotein reductase] + O2 = (S)-2,3-epoxysqualene + oxidized [NADPH--hemoprotein reductase] + H2O + H(+). It participates in terpene metabolism; lanosterol biosynthesis; lanosterol from farnesyl diphosphate: step 2/3. Functionally, catalyzes the stereospecific oxidation of squalene to (S)-2,3-epoxysqualene, and is considered to be a rate-limiting enzyme in steroid biosynthesis. Can produce not only oxidosqualene, but also 2,3:22,23-dioxidosqualene. This is Squalene epoxidase 3 (SQE3) from Arabidopsis thaliana (Mouse-ear cress).